Here is a 40-residue protein sequence, read N- to C-terminus: Large ribosomal subunit protein bL36B (40 aa).

It belongs to the bacterial ribosomal protein bL36 family.

The sequence is that of Large ribosomal subunit protein bL36B from Kocuria rhizophila (strain ATCC 9341 / DSM 348 / NBRC 103217 / DC2201).